Reading from the N-terminus, the 331-residue chain is DNA double-strand break repair nuclease NurA (331 aa).

The Mn(2+) site is built by Asp-56 and Asp-131.

Belongs to the NurA family. In terms of assembly, homodimer. Interacts with SSB. Requires Mn(2+) as cofactor.

With respect to regulation, the 5'-3' ssDNA and dsDNA exonuclease and ssDNA endonuclease activities are inhibited by SSB (single-stranded DNA-binding protein). Functionally, involved in DNA double-strand break (DSB) repair. Probably acts with HerA to stimulate resection of the 5' strand and produce the long 3' single-strand that is required for RadA loading. Exhibits both single-stranded endonuclease activity and 5'-3' exonuclease activity on single-stranded and double-stranded DNA. This is DNA double-strand break repair nuclease NurA from Sulfurisphaera tokodaii (strain DSM 16993 / JCM 10545 / NBRC 100140 / 7) (Sulfolobus tokodaii).